The primary structure comprises 396 residues: Sialyltransferase-like protein 2 (396 aa).

Residues 1 to 6 are Cytoplasmic-facing; sequence MKRRHL. The chain crosses the membrane as a helical; Signal-anchor for type II membrane protein span at residues 7-23; the sequence is PPVLVLLLLSILSLSFR. The Lumenal portion of the chain corresponds to 24–396; sequence RRLLVLQGPP…FTVPPVRLHR (373 aa). Residues Asn72, Asn260, and Asn304 are each glycosylated (N-linked (GlcNAc...) asparagine).

This sequence belongs to the glycosyltransferase 29 family.

The protein resides in the golgi apparatus membrane. In terms of biological role, does not possess sialyltransferase-like activity in vitro. This chain is Sialyltransferase-like protein 2, found in Oryza sativa subsp. indica (Rice).